The following is a 175-amino-acid chain: Hypoxanthine-guanine phosphoribosyltransferase (175 aa).

Positions 40 and 41 each coordinate diphosphate. The Mg(2+) site is built by glutamate 96 and aspartate 97. Residue aspartate 100 is the Proton acceptor of the active site. Residues lysine 128, phenylalanine 149–leucine 150, and aspartate 156 contribute to the GMP site. Arginine 162 serves as a coordination point for diphosphate.

This sequence belongs to the purine/pyrimidine phosphoribosyltransferase family. The cofactor is Mg(2+).

The protein localises to the cytoplasm. It carries out the reaction IMP + diphosphate = hypoxanthine + 5-phospho-alpha-D-ribose 1-diphosphate. The enzyme catalyses GMP + diphosphate = guanine + 5-phospho-alpha-D-ribose 1-diphosphate. Its pathway is purine metabolism; IMP biosynthesis via salvage pathway; IMP from hypoxanthine: step 1/1. It functions in the pathway purine metabolism; GMP biosynthesis via salvage pathway; GMP from guanine: step 1/1. Purine salvage pathway enzyme that catalyzes the transfer of the ribosyl-5-phosphate group from 5-phospho-alpha-D-ribose 1-diphosphate (PRPP) to the N9 position of the 6-oxopurines hypoxanthine and guanine to form the corresponding ribonucleotides IMP (inosine 5'-monophosphate) and GMP (guanosine 5'-monophosphate), with the release of PPi. The polypeptide is Hypoxanthine-guanine phosphoribosyltransferase (hpt) (Mycoplasma pneumoniae (strain ATCC 29342 / M129 / Subtype 1) (Mycoplasmoides pneumoniae)).